The chain runs to 267 residues: Thiazole synthase (267 aa).

Residue Lys110 is the Schiff-base intermediate with DXP of the active site. Residues Gly171, 197 to 198 (AG), and 219 to 220 (NT) contribute to the 1-deoxy-D-xylulose 5-phosphate site.

The protein belongs to the ThiG family. In terms of assembly, homotetramer. Forms heterodimers with either ThiH or ThiS.

The protein localises to the cytoplasm. It carries out the reaction [ThiS sulfur-carrier protein]-C-terminal-Gly-aminoethanethioate + 2-iminoacetate + 1-deoxy-D-xylulose 5-phosphate = [ThiS sulfur-carrier protein]-C-terminal Gly-Gly + 2-[(2R,5Z)-2-carboxy-4-methylthiazol-5(2H)-ylidene]ethyl phosphate + 2 H2O + H(+). Its pathway is cofactor biosynthesis; thiamine diphosphate biosynthesis. Its function is as follows. Catalyzes the rearrangement of 1-deoxy-D-xylulose 5-phosphate (DXP) to produce the thiazole phosphate moiety of thiamine. Sulfur is provided by the thiocarboxylate moiety of the carrier protein ThiS. In vitro, sulfur can be provided by H(2)S. This chain is Thiazole synthase, found in Maricaulis maris (strain MCS10) (Caulobacter maris).